The chain runs to 307 residues: Small ribosomal subunit biogenesis GTPase RsgA (307 aa).

Positions 1–20 are disordered; the sequence is MPSEHPFSDGISTPNPKETM. Residues 10 to 20 are compositionally biased toward polar residues; it reads GISTPNPKETM. A CP-type G domain is found at 85–242; the sequence is RQDAWKTKLI…LIDSPGLQEF (158 aa). Residues 135 to 138 and 184 to 192 each bind GTP; these read NKAD and GQSGMGKST. Zn(2+) is bound by residues Cys266, Cys271, His273, and Cys279.

Belongs to the TRAFAC class YlqF/YawG GTPase family. RsgA subfamily. In terms of assembly, monomer. Associates with 30S ribosomal subunit, binds 16S rRNA. Requires Zn(2+) as cofactor.

It localises to the cytoplasm. In terms of biological role, one of several proteins that assist in the late maturation steps of the functional core of the 30S ribosomal subunit. Helps release RbfA from mature subunits. May play a role in the assembly of ribosomal proteins into the subunit. Circularly permuted GTPase that catalyzes slow GTP hydrolysis, GTPase activity is stimulated by the 30S ribosomal subunit. This is Small ribosomal subunit biogenesis GTPase RsgA from Neisseria meningitidis serogroup A / serotype 4A (strain DSM 15465 / Z2491).